The primary structure comprises 791 residues: Solute carrier family 26 member 9 (791 aa).

Residues 1–70 lie on the Cytoplasmic side of the membrane; it reads MSQPRPRYVV…WLPKYKIKDY (70 aa). Residues 71–96 form a helical membrane-spanning segment; the sequence is IIPDLLGGLSGGSIQVPQGMAFALLA. Topologically, residues 97 to 99 are extracellular; sequence NLP. The chain crosses the membrane as a helical span at residues 100–117; the sequence is AVNGLYSSFFPLLTYFFL. Over 118–128 the chain is Cytoplasmic; sequence GGVHQMVPGTF. The chain crosses the membrane as a helical span at residues 129 to 142; that stretch reads AVISILVGNICLQL. Residues 143-171 lie on the Extracellular side of the membrane; sequence APESKFQVFNNATNESYVDTAAMEAERLH. The chain crosses the membrane as a helical span at residues 172–190; sequence VSATLACLTAIIQMGLGFM. At 191-202 the chain is on the cytoplasmic side; that stretch reads QFGFVAIYLSES. The chain crosses the membrane as a helical span at residues 203 to 224; it reads FIRGFMTAAGLQILISVLKYIF. Residues 225–235 are Extracellular-facing; it reads GLTIPSYTGPG. Residues 236–244 constitute an intramembrane region (helical); the sequence is SIVFTFIDI. The Extracellular portion of the chain corresponds to 245 to 254; that stretch reads CKNLPHTNIA. Residues 255–273 traverse the membrane as a helical segment; the sequence is SLIFALISGAFLVLVKELN. Residues 274–281 lie on the Cytoplasmic side of the membrane; the sequence is ARYMHKIR. Residues 282–297 traverse the membrane as a helical segment; the sequence is FPIPTEMIVVVVATAI. Topologically, residues 298–327 are extracellular; it reads SGGCKMPKKYHMQIVGEIQRGFPTPVSPVV. The chain crosses the membrane as a helical span at residues 328 to 348; sequence SQWKDMIGTAFSLAIVSYVIN. Residues 349–366 are Cytoplasmic-facing; that stretch reads LAMGRTLANKHGYDVDSN. Residues 367–382 traverse the membrane as a helical segment; the sequence is QEMIALGCSNFFGSFF. The Extracellular segment spans residues 383 to 390; it reads KIHVICCA. The chain crosses the membrane as a helical span at residues 391–400; it reads LSVTLAVDGA. The Cytoplasmic portion of the chain corresponds to 401-404; sequence GGKS. The helical transmembrane segment at 405–423 threads the bilayer; the sequence is QVASLCVSLVVMITMLVLG. Over 424 to 428 the chain is Extracellular; that stretch reads IYLYP. Residues 429-450 traverse the membrane as a helical segment; the sequence is LPKSVLGALIAVNLKNSLKQLT. Topologically, residues 451-464 are cytoplasmic; that stretch reads DPYYLWRKSKLDCC. Residues 465 to 476 form a helical membrane-spanning segment; it reads IWVVSFLSSFFL. Residue Ser477 is a topological domain, extracellular. A helical transmembrane segment spans residues 478–489; it reads LPYGVAVGVAFS. Topologically, residues 490–791 are cytoplasmic; it reads VLVVVFQTQF…MFHAETLTAL (302 aa). The 219-residue stretch at 519 to 737 folds into the STAS domain; the sequence is TYNRAQDIQG…PSIHDAVLFA (219 aa). The tract at residues 602 to 650 is disordered; that stretch reads FENAPPTDPNNNQTPANGTSVSYITFSPDSSSPAQSEPPASAEAPGEPS. A compositionally biased stretch (polar residues) spans 610-626; it reads PNNNQTPANGTSVSYIT. The span at 628-650 shows a compositional bias: low complexity; it reads SPDSSSPAQSEPPASAEAPGEPS.

Belongs to the SLC26A/SulP transporter (TC 2.A.53) family. In terms of assembly, homodimer. As to expression, predominantly expressed in lung at the luminal side of the bronchiolar and alveolar epithelium of lung. To a lower extent, also expressed in pancreas and prostate.

It localises to the cell membrane. The protein localises to the endomembrane system. The enzyme catalyses chloride(in) = chloride(out). It catalyses the reaction hydrogencarbonate(in) + chloride(out) = hydrogencarbonate(out) + chloride(in). Inhibited by ammonium and thiosulfate. In terms of biological role, ion transporter that can act both as an ion channel and anion exchanger. Mainly acts as a chloride channel, which mediate uncoupled chloride anion transport in an alternate-access mechanism where a saturable binding site is alternately exposed to either one or the other side of the membrane. Also acts as a DIDS- and thiosulfate- sensitive anion exchanger the exchange of chloride for bicarbonate ions across the cell membrane. This is Solute carrier family 26 member 9 from Homo sapiens (Human).